We begin with the raw amino-acid sequence, 162 residues long: Large ribosomal subunit protein bL9 (162 aa).

This sequence belongs to the bacterial ribosomal protein bL9 family.

In terms of biological role, binds to the 23S rRNA. In Chlorobaculum parvum (strain DSM 263 / NCIMB 8327) (Chlorobium vibrioforme subsp. thiosulfatophilum), this protein is Large ribosomal subunit protein bL9.